The sequence spans 306 residues: Agmatinase (306 aa).

Mn(2+) is bound by residues His126, Asp149, His151, Asp153, Asp230, and Asp232.

This sequence belongs to the arginase family. Agmatinase subfamily. It depends on Mn(2+) as a cofactor.

The catalysed reaction is agmatine + H2O = urea + putrescine. It functions in the pathway amine and polyamine biosynthesis; putrescine biosynthesis via agmatine pathway; putrescine from agmatine: step 1/1. Functionally, catalyzes the formation of putrescine from agmatine. The protein is Agmatinase of Citrobacter koseri (strain ATCC BAA-895 / CDC 4225-83 / SGSC4696).